Here is a 202-residue protein sequence, read N- to C-terminus: MDYFSMMVSLLLVAFHGAPETAASGTELSTGAENPGEKPPASAPWRPRRSKRCSCSSLMDKECVYFCHLDIIWVNTPGHIVPYGLGSPSRSKRSLKDLFPTRAAYHKNRCQCTSPHDKKCWNFCQAGTELRAQETMEKGRNNLKKGKDCSKLGKKCILQKLMQGRKIRRLEAISNSIKTSFHAAQLRAQLHREQKVTHNRTH.

Positions 1-23 are cleaved as a signal peptide; sequence MDYFSMMVSLLLVAFHGAPETAA. A disordered region spans residues 24-49; it reads SGTELSTGAENPGEKPPASAPWRPRR. Positions 24–50 are excised as a propeptide; that stretch reads SGTELSTGAENPGEKPPASAPWRPRRS. Cystine bridges form between Cys-53–Cys-67 and Cys-55–Cys-63. The propeptide occupies 74–202; it reads VNTPGHIVPY…EQKVTHNRTH (129 aa). Residues 110–124 are endothelin-like; the sequence is CQCTSPHDKKCWNFC.

It belongs to the endothelin/sarafotoxin family.

Its subcellular location is the secreted. In terms of biological role, endothelins are endothelium-derived vasoconstrictor peptides. Probable ligand for G-protein coupled receptors EDNRA and EDNRB which activates PTK2B, BCAR1, BCAR3 and, GTPases RAP1 and RHOA cascade in glomerular mesangial cells. Also binds the DEAR/FBXW7-AS1 receptor. Promotes mesenteric arterial wall remodeling via activation of ROCK signaling and subsequent colocalization of NFATC3 with F-actin filaments. NFATC3 then translocates to the nucleus where it subsequently promotes the transcription of the smooth muscle hypertrophy and differentiation marker ACTA2. In Oryctolagus cuniculus (Rabbit), this protein is Endothelin-1 (EDN1).